The following is a 58-amino-acid chain: Photosystem II reaction center X protein (58 aa).

Residues 27-47 (IGSFLAAAAFIVVPAASFLIW) form a helical membrane-spanning segment.

Belongs to the PsbX family. Type 2 subfamily. As to quaternary structure, PSII consists of a core antenna complex that captures photons, and an electron transfer chain that converts photonic excitation into a charge separation. PSII forms dimeric complexes.

The protein resides in the cellular thylakoid membrane. Its function is as follows. Involved in the binding and/or turnover of quinones at the Q(B) site of Photosystem II. This is Photosystem II reaction center X protein from Prochlorococcus marinus (strain MIT 9211).